The chain runs to 173 residues: Transcriptional repressor NrdR (173 aa).

A zinc finger lies at 3 to 34; sequence CPFCQHADTRVIDSRVSEDGATIRRRRECEAC. The ATP-cone domain occupies 49-139; that stretch reads PAIVKSDGTR…VYRSFEDVAD (91 aa).

This sequence belongs to the NrdR family. The cofactor is Zn(2+).

Its function is as follows. Negatively regulates transcription of bacterial ribonucleotide reductase nrd genes and operons by binding to NrdR-boxes. In Stenotrophomonas maltophilia (strain R551-3), this protein is Transcriptional repressor NrdR.